The primary structure comprises 212 residues: Ribosomal RNA small subunit methyltransferase G (212 aa).

S-adenosyl-L-methionine contacts are provided by residues Gly-72, Leu-77, 123-124, and Arg-138; that span reads VE.

This sequence belongs to the methyltransferase superfamily. RNA methyltransferase RsmG family.

Its subcellular location is the cytoplasm. It catalyses the reaction guanosine(527) in 16S rRNA + S-adenosyl-L-methionine = N(7)-methylguanosine(527) in 16S rRNA + S-adenosyl-L-homocysteine. In terms of biological role, specifically methylates the N7 position of guanine in position 527 of 16S rRNA. The protein is Ribosomal RNA small subunit methyltransferase G of Histophilus somni (strain 129Pt) (Haemophilus somnus).